The following is a 191-amino-acid chain: Superoxide dismutase [Mn/Fe] (191 aa).

4 residues coordinate Fe(3+): His-27, His-74, Asp-157, and His-161. Mn(2+)-binding residues include His-27, His-74, Asp-157, and His-161.

It belongs to the iron/manganese superoxide dismutase family. Homodimer. Mn(2+) is required as a cofactor. Fe(3+) serves as cofactor.

The catalysed reaction is 2 superoxide + 2 H(+) = H2O2 + O2. Inhibited by hydrogen peroxide. In terms of biological role, destroys superoxide anion radicals which are normally produced within the cells and which are toxic to biological systems. Catalyzes the dismutation of superoxide anion radicals into O2 and H2O2 by successive reduction and oxidation of the transition metal ion at the active site. In Porphyromonas gingivalis (strain ATCC BAA-308 / W83), this protein is Superoxide dismutase [Mn/Fe] (sodB).